Consider the following 1068-residue polypeptide: WD repeat-containing protein on Y chromosome (1068 aa).

WD repeat units lie at residues 155 to 199 (DEVT…IRTA), 201 to 242 (SESI…RGPF), 322 to 361 (RIPL…EPSA), 365 to 404 (GHNG…LLQT), 455 to 494 (THAA…RKII), 507 to 546 (IIDI…VVRN), and 594 to 634 (FHTD…RRYS). Residues 657–687 (SKRLASRPTPGNHGLQMGRAGRSTVLNRPED) form a disordered region. WD repeat units follow at residues 746–785 (KTGD…VPET) and 829–868 (GHLK…LGTL). The disordered stretch occupies residues 1026–1068 (SAINIKQPSRRRSDKTNDTRNVRTPRARDLIALEMSSSHASQS). The segment covering 1039-1056 (DKTNDTRNVRTPRARDLI) has biased composition (basic and acidic residues).

In Drosophila yakuba (Fruit fly), this protein is WD repeat-containing protein on Y chromosome.